Here is a 194-residue protein sequence, read N- to C-terminus: Probable nicotinate-nucleotide adenylyltransferase (194 aa).

The protein belongs to the NadD family.

The enzyme catalyses nicotinate beta-D-ribonucleotide + ATP + H(+) = deamido-NAD(+) + diphosphate. The protein operates within cofactor biosynthesis; NAD(+) biosynthesis; deamido-NAD(+) from nicotinate D-ribonucleotide: step 1/1. In terms of biological role, catalyzes the reversible adenylation of nicotinate mononucleotide (NaMN) to nicotinic acid adenine dinucleotide (NaAD). The chain is Probable nicotinate-nucleotide adenylyltransferase from Christiangramia forsetii (strain DSM 17595 / CGMCC 1.15422 / KT0803) (Gramella forsetii).